The sequence spans 688 residues: PHD finger protein 21A (688 aa).

A Glycyl lysine isopeptide (Lys-Gly) (interchain with G-Cter in SUMO2) cross-link involves residue lysine 65. Disordered stretches follow at residues 78–127 (SQSE…LTAS) and 327–373 (PQTV…ENPQ). Residues 85-127 (QTAQQQPLQPLQQQQPQQPQQQQQQQQQHAQQSAAAPPSLTAS) show a composition bias toward low complexity. Residues 336-354 (SLEKQTVKSHPEAEEKQAE) are compositionally biased toward basic and acidic residues. The segment at residues 434–446 (TRKRGRPPKYNAV) is a DNA-binding region (a.T hook). The tract at residues 449 to 471 (FGALTPTSPPSSHPDSPENEKTE) is disordered. The residue at position 453 (threonine 453) is a Phosphothreonine. Serine 456 is modified (phosphoserine). The PHD-type zinc-finger motif lies at 497-544 (EDFCSVCRKSGQLLMCDTCSRVYHLDCLEPPLKTIPKGMWICPRCQDQ). The stretch at 571 to 609 (KEEEKQKLLKWSSDLKQEREQLEQKVKELSSSISKCMEM) forms a coiled coil. A disordered region spans residues 650-688 (GALSNGPDCTPPANAASTPAPSPSSQSCTANCNQGEETK). The span at 660 to 679 (PPANAASTPAPSPSSQSCTA) shows a compositional bias: low complexity.

Component of a BHC histone deacetylase complex that contains HDAC1, HDAC2, HMG20B/BRAF35, KDM1A, RCOR1/CoREST and PHF21A/BHC80. The BHC complex may also contain ZMYM2, ZNF217, ZMYM3, GSE1 and GTF2I. In the complex, it interacts directly with HDAC1, HDAC2, HMG20B/BRAF35, KDM1A and RCOR1/CoREST. In terms of tissue distribution, expressed in the brain and testis. Weakly or not expressed in other tissues tested. Localized throughout the central nervous system (CNS) in brain, including the cerebellum, hippocampus, and cortex. Notably present in neuronal cells of granular cell layer and dentate gyrus in cerebellum and hippocampus, respectively. In the seminiferous tubules, the signals it is present strongly in spermatocytes, and weakly in spermatogonia and round spermatids. In some cases, it is also observed solely in spermatocytes (at protein level).

Its subcellular location is the nucleus. Functionally, component of the BHC complex, a corepressor complex that represses transcription of neuron-specific genes in non-neuronal cells. The BHC complex is recruited at RE1/NRSE sites by REST and acts by deacetylating and demethylating specific sites on histones, thereby acting as a chromatin modifier. In the BHC complex, it may act as a scaffold. Inhibits KDM1A-mediated demethylation of 'Lys-4' of histone H3 in vitro, suggesting a role in demethylation regulation. This chain is PHD finger protein 21A, found in Mus musculus (Mouse).